Consider the following 759-residue polypeptide: Phosphoribosylformylglycinamidine synthase subunit PurL (759 aa).

Residue His46 is part of the active site. ATP contacts are provided by Tyr49 and Lys88. Residue Glu90 coordinates Mg(2+). Residues 91–94 (SHNH) and Arg113 each bind substrate. The active-site Proton acceptor is the His92. Asp114 contributes to the Mg(2+) binding site. Residue Gln237 coordinates substrate. Asp265 is a Mg(2+) binding site. 309 to 311 (ESQ) provides a ligand contact to substrate. The ATP site is built by Asp498 and Gly535. Residue Asn536 participates in Mg(2+) binding. A substrate-binding site is contributed by Ser538.

The protein belongs to the FGAMS family. As to quaternary structure, monomer. Part of the FGAM synthase complex composed of 1 PurL, 1 PurQ and 2 PurS subunits.

Its subcellular location is the cytoplasm. The catalysed reaction is N(2)-formyl-N(1)-(5-phospho-beta-D-ribosyl)glycinamide + L-glutamine + ATP + H2O = 2-formamido-N(1)-(5-O-phospho-beta-D-ribosyl)acetamidine + L-glutamate + ADP + phosphate + H(+). The protein operates within purine metabolism; IMP biosynthesis via de novo pathway; 5-amino-1-(5-phospho-D-ribosyl)imidazole from N(2)-formyl-N(1)-(5-phospho-D-ribosyl)glycinamide: step 1/2. Part of the phosphoribosylformylglycinamidine synthase complex involved in the purines biosynthetic pathway. Catalyzes the ATP-dependent conversion of formylglycinamide ribonucleotide (FGAR) and glutamine to yield formylglycinamidine ribonucleotide (FGAM) and glutamate. The FGAM synthase complex is composed of three subunits. PurQ produces an ammonia molecule by converting glutamine to glutamate. PurL transfers the ammonia molecule to FGAR to form FGAM in an ATP-dependent manner. PurS interacts with PurQ and PurL and is thought to assist in the transfer of the ammonia molecule from PurQ to PurL. The chain is Phosphoribosylformylglycinamidine synthase subunit PurL from Anaeromyxobacter dehalogenans (strain 2CP-1 / ATCC BAA-258).